The following is a 491-amino-acid chain: Protein nucleotidyltransferase YdiU (491 aa).

ATP is bound by residues Gly-94, Gly-96, Arg-97, Lys-117, Asp-129, Gly-130, Arg-180, and Arg-187. Asp-256 serves as the catalytic Proton acceptor. Mg(2+)-binding residues include Asn-257 and Asp-266. Asp-266 contacts ATP.

This sequence belongs to the SELO family. Mg(2+) serves as cofactor. Mn(2+) is required as a cofactor.

The enzyme catalyses L-seryl-[protein] + ATP = 3-O-(5'-adenylyl)-L-seryl-[protein] + diphosphate. It carries out the reaction L-threonyl-[protein] + ATP = 3-O-(5'-adenylyl)-L-threonyl-[protein] + diphosphate. It catalyses the reaction L-tyrosyl-[protein] + ATP = O-(5'-adenylyl)-L-tyrosyl-[protein] + diphosphate. The catalysed reaction is L-histidyl-[protein] + UTP = N(tele)-(5'-uridylyl)-L-histidyl-[protein] + diphosphate. The enzyme catalyses L-seryl-[protein] + UTP = O-(5'-uridylyl)-L-seryl-[protein] + diphosphate. It carries out the reaction L-tyrosyl-[protein] + UTP = O-(5'-uridylyl)-L-tyrosyl-[protein] + diphosphate. Functionally, nucleotidyltransferase involved in the post-translational modification of proteins. It can catalyze the addition of adenosine monophosphate (AMP) or uridine monophosphate (UMP) to a protein, resulting in modifications known as AMPylation and UMPylation. The protein is Protein nucleotidyltransferase YdiU of Bacillus cytotoxicus (strain DSM 22905 / CIP 110041 / 391-98 / NVH 391-98).